The chain runs to 202 residues: Ribosome biogenesis regulatory protein homolog (202 aa).

The tract at residues 82 to 103 (TLPPPTTPLPREKPVPQPKPET) is disordered.

It belongs to the RRS1 family. In terms of assembly, component of a hexameric 5S RNP precursor complex, composed of 5S RNA, RRS1, RPF2, RPL5, RPL11 and SYO1; this complex acts as a precursor for ribosome assembly.

Its subcellular location is the nucleus. Functionally, involved in ribosomal large subunit assembly. In Chaetomium thermophilum (strain DSM 1495 / CBS 144.50 / IMI 039719) (Thermochaetoides thermophila), this protein is Ribosome biogenesis regulatory protein homolog.